The following is a 328-amino-acid chain: Phosphate acyltransferase (328 aa).

It belongs to the PlsX family. In terms of assembly, homodimer. Probably interacts with PlsY.

The protein localises to the cytoplasm. The catalysed reaction is a fatty acyl-[ACP] + phosphate = an acyl phosphate + holo-[ACP]. It participates in lipid metabolism; phospholipid metabolism. In terms of biological role, catalyzes the reversible formation of acyl-phosphate (acyl-PO(4)) from acyl-[acyl-carrier-protein] (acyl-ACP). This enzyme utilizes acyl-ACP as fatty acyl donor, but not acyl-CoA. The polypeptide is Phosphate acyltransferase (Staphylococcus aureus (strain USA300)).